The primary structure comprises 44 residues: U4-ctenitoxin-Pk1a (44 aa).

5 disulfides stabilise this stretch: Cys-4–Cys-18, Cys-11–Cys-24, Cys-15–Cys-42, Cys-17–Cys-33, and Cys-26–Cys-31.

Expressed by the venom gland.

It localises to the secreted. Functionally, neurotoxin. Causes spastic paralysis and death in mice within 10 minutes at dose levels of 3 ug per mouse. The polypeptide is U4-ctenitoxin-Pk1a (Phoneutria keyserlingi (Brazilian wandering spider)).